We begin with the raw amino-acid sequence, 336 residues long: Small ribosomal subunit protein uS9m (336 aa).

A disordered region spans residues 32 to 81 (STTTTTTTTTTTTTSDEIPTTKPRFQSRFRRNQQPHQQQRSPYTSSQVTE). The span at 33–45 (TTTTTTTTTTTTT) shows a compositional bias: low complexity. Residues 65–81 (QPHQQQRSPYTSSQVTE) show a composition bias toward polar residues.

This sequence belongs to the universal ribosomal protein uS9 family. Component of the mitochondrial small ribosomal subunit (mt-SSU).

The protein localises to the mitochondrion. Functionally, component of the mitochondrial ribosome (mitoribosome), a dedicated translation machinery responsible for the synthesis of mitochondrial genome-encoded proteins, including at least some of the essential transmembrane subunits of the mitochondrial respiratory chain. The mitoribosomes are attached to the mitochondrial inner membrane and translation products are cotranslationally integrated into the membrane. This chain is Small ribosomal subunit protein uS9m (MRPS9), found in Candida albicans (strain SC5314 / ATCC MYA-2876) (Yeast).